The following is a 218-amino-acid chain: MATLTPRQQQIFDLIRDTIRNTGFPPTRAEIAAEFGFSSPNSAEEHLRALARKGVIELTPGASRGIRLKVTRSDSERPDQFSLPMPGVLQLTLPLVGRVAAGSPILAAEHIDRQYQVDASVFDERPDYLLRVRGLSMRDAGILDGDLLAVKKASEAANGKVVVARLGDDVTVKRLKKRGDTIELIAENPDFQNIVLHAGRDEFSLEGIAVGLIRSSGF.

A DNA-binding region (H-T-H motif) is located at residues 28–48; sequence RAEIAAEFGFSSPNSAEEHLR. Active-site for autocatalytic cleavage activity residues include Ser136 and Lys173.

Belongs to the peptidase S24 family. In terms of assembly, homodimer.

The catalysed reaction is Hydrolysis of Ala-|-Gly bond in repressor LexA.. Represses a number of genes involved in the response to DNA damage (SOS response), including recA and lexA. In the presence of single-stranded DNA, RecA interacts with LexA causing an autocatalytic cleavage which disrupts the DNA-binding part of LexA, leading to derepression of the SOS regulon and eventually DNA repair. This chain is LexA repressor, found in Cupriavidus metallidurans (strain ATCC 43123 / DSM 2839 / NBRC 102507 / CH34) (Ralstonia metallidurans).